The following is a 397-amino-acid chain: MAKAKFERSKPHVNIGTIGHVDHGKTTLTAAITTVLAQKGGASATKYDEIDKAPEEKERGITINTSHVEYETANRHYAHVDCPGHADYVKNMITGAAQMDGAILVVSAADGPMPQTREHILLASRVGVQYIVVFLNKADQVDDPELIELVEMEVRELLNEYGFPGDDTPIVVGSALEVLENQDNAEKTKCIDELMEAIDSYIPTPERATDQPFLMPVEDVFTITGRGTVATGRVERGVLHTGDEVELIGMKQEVSKTVCTGIEMFRKILDEAMAGDNIGALLRGIQRDEIQRGQVLAKPGSVTPHKKFVGQVYVLKKEEGGRHTPFFNGYRPQFYFRTTDVTGSINLPEGVEMVMPGDHIDMAVELITPVAMHENLRFAIREGGRTVGSGVVTTISE.

The tr-type G domain occupies 10 to 206 (KPHVNIGTIG…AIDSYIPTPE (197 aa)). The G1 stretch occupies residues 19–26 (GHVDHGKT). 19–26 (GHVDHGKT) lines the GTP pocket. Mg(2+) is bound at residue Thr-26. The interval 60–64 (GITIN) is G2. A G3 region spans residues 81 to 84 (DCPG). GTP is bound by residues 81 to 85 (DCPGH) and 136 to 139 (NKAD). A G4 region spans residues 136 to 139 (NKAD). A G5 region spans residues 174 to 176 (SAL).

This sequence belongs to the TRAFAC class translation factor GTPase superfamily. Classic translation factor GTPase family. EF-Tu/EF-1A subfamily. As to quaternary structure, monomer.

It is found in the cytoplasm. It carries out the reaction GTP + H2O = GDP + phosphate + H(+). GTP hydrolase that promotes the GTP-dependent binding of aminoacyl-tRNA to the A-site of ribosomes during protein biosynthesis. In Clostridium botulinum (strain ATCC 19397 / Type A), this protein is Elongation factor Tu.